A 65-amino-acid polypeptide reads, in one-letter code: Sarcoplasmic/endoplasmic reticulum calcium ATPase regulator ARLN (65 aa).

N-acetylmethionine is present on M1. Positions 1–36 (MEVSQAASGTDGVRERRGSFEAGRRNQDEAPQSGMN) are disordered. Residues 12 to 28 (GVRERRGSFEAGRRNQD) show a composition bias toward basic and acidic residues. S19 bears the Phosphoserine mark. Residues 44 to 64 (WLDLWLFILFDLALFVFVYLL) form a helical membrane-spanning segment.

In terms of assembly, homooligomer. Can also form heterooligomers with other sarcoplasmic/endoplasmic reticulum calcium ATPase (SERCA) regulators ERLN, PLN, SLN and STRIT1/DWORF. Monomer. Interacts as a monomer with ATP2A2/SERCA2; the interaction results in inhibition of ATP2A2 Ca(2+) affinity. In terms of tissue distribution, in the embryo, expressed in heart, epidermal epithelium, salivary gland, brown fat, intestinal epithelium and bladder urothelium.

Its subcellular location is the endoplasmic reticulum membrane. Functionally, inhibits the activity of the calcium ATPases ATP2A2/SERCA2 and ATP2A3/SERCA3 by decreasing their apparent affinity for Ca(2+). This chain is Sarcoplasmic/endoplasmic reticulum calcium ATPase regulator ARLN (Arln), found in Mus musculus (Mouse).